The chain runs to 355 residues: GTPase Obg (355 aa).

Residues 1–159 (MKFLDEAKVY…KTIWLRLKLI (159 aa)) form the Obg domain. Residues 160 to 327 (ADAGLVGLPN…ALRALRDIIV (168 aa)) enclose the OBG-type G domain. Residues 166 to 173 (GLPNAGKS), 191 to 195 (FTTLH), 212 to 215 (DIPG), 279 to 282 (SQID), and 308 to 310 (SAA) each bind GTP. S173 and T193 together coordinate Mg(2+). Residues 333–355 (GDTALPDRSMPHESEVEEEDDRL) form a disordered region.

It belongs to the TRAFAC class OBG-HflX-like GTPase superfamily. OBG GTPase family. Monomer. Requires Mg(2+) as cofactor.

It is found in the cytoplasm. Functionally, an essential GTPase which binds GTP, GDP and possibly (p)ppGpp with moderate affinity, with high nucleotide exchange rates and a fairly low GTP hydrolysis rate. Plays a role in control of the cell cycle, stress response, ribosome biogenesis and in those bacteria that undergo differentiation, in morphogenesis control. The polypeptide is GTPase Obg (Agrobacterium fabrum (strain C58 / ATCC 33970) (Agrobacterium tumefaciens (strain C58))).